Reading from the N-terminus, the 906-residue chain is Gamma-tubulin complex component 3 homolog (906 aa).

Residues 208 to 229 (GQQPSQQSTTTKGLPNTVSRNV) show a composition bias toward polar residues. Positions 208–242 (GQQPSQQSTTTKGLPNTVSRNVPRTRREGDSSGSV) are disordered.

Belongs to the TUBGCP family. As to quaternary structure, interacts with gamma-tubulin.

Its subcellular location is the cytoplasm. It localises to the cytoskeleton. The protein localises to the microtubule organizing center. It is found in the centrosome. Necessary for the recruitment of gamma-tubulin to the centrosome and for the formation of a functional centrosome. The chain is Gamma-tubulin complex component 3 homolog (tubgcp3) from Xenopus laevis (African clawed frog).